We begin with the raw amino-acid sequence, 289 residues long: Pantothenate synthetase (289 aa).

Met30–His37 is a binding site for ATP. Residue His37 is the Proton donor of the active site. Position 61 (Gln61) interacts with (R)-pantoate. A beta-alanine-binding site is contributed by Gln61. Gly147 to Asp150 is a binding site for ATP. Residue Gln153 participates in (R)-pantoate binding. Residues Val176 and Cys184–Arg187 contribute to the ATP site.

The protein belongs to the pantothenate synthetase family. Homodimer.

The protein resides in the cytoplasm. It carries out the reaction (R)-pantoate + beta-alanine + ATP = (R)-pantothenate + AMP + diphosphate + H(+). Its pathway is cofactor biosynthesis; (R)-pantothenate biosynthesis; (R)-pantothenate from (R)-pantoate and beta-alanine: step 1/1. In terms of biological role, catalyzes the condensation of pantoate with beta-alanine in an ATP-dependent reaction via a pantoyl-adenylate intermediate. The sequence is that of Pantothenate synthetase from Brucella anthropi (strain ATCC 49188 / DSM 6882 / CCUG 24695 / JCM 21032 / LMG 3331 / NBRC 15819 / NCTC 12168 / Alc 37) (Ochrobactrum anthropi).